Consider the following 329-residue polypeptide: Sex comb on midleg-like protein 1 (329 aa).

Phosphoserine occurs at positions 138 and 238. The tract at residues Ser-138 to Pro-157 is disordered. An SAM domain is found at Trp-258–Lys-325.

The protein belongs to the SCM family.

Its subcellular location is the nucleus. Functionally, putative Polycomb group (PcG) protein. PcG proteins act by forming multiprotein complexes, which are required to maintain the transcriptionally repressive state of homeotic genes throughout development. May be involved in spermatogenesis during sexual maturation. The polypeptide is Sex comb on midleg-like protein 1 (SCML1) (Gorilla gorilla gorilla (Western lowland gorilla)).